The primary structure comprises 165 residues: uncharacterized protein (165 aa).

Residues 49–165 are disordered; sequence QLKPQGPKRP…VAQQREIAQK (117 aa). Residues 94–106 are compositionally biased toward polar residues; the sequence is MNNNNNYKISYTS. Over residues 120–135 the composition is skewed to low complexity; sequence TLQRTTPQAQPTPQQP. The span at 139 to 157 shows a compositional bias: polar residues; that stretch reads SRSSGGITGAVNNRPQMVA.

This is an uncharacterized protein from Caenorhabditis elegans.